Here is a 107-residue protein sequence, read N- to C-terminus: UPF0060 membrane protein PSHAa1175 (107 aa).

4 helical membrane-spanning segments follow: residues 3-23, 30-50, 60-80, and 84-104; these read IFGLFLITALAEIIGCYLPYL, SVWLLVPAALSLAIFAWLLSL, AAYGGVYIFMAILWLWAVDGI, and TWDLVGSGVALVGMAIIMFAP.

Belongs to the UPF0060 family.

The protein resides in the cell inner membrane. The sequence is that of UPF0060 membrane protein PSHAa1175 from Pseudoalteromonas translucida (strain TAC 125).